Consider the following 684-residue polypeptide: Glycine--tRNA ligase beta subunit (684 aa).

This sequence belongs to the class-II aminoacyl-tRNA synthetase family. In terms of assembly, tetramer of two alpha and two beta subunits.

The protein localises to the cytoplasm. The enzyme catalyses tRNA(Gly) + glycine + ATP = glycyl-tRNA(Gly) + AMP + diphosphate. This chain is Glycine--tRNA ligase beta subunit, found in Pseudomonas aeruginosa (strain ATCC 15692 / DSM 22644 / CIP 104116 / JCM 14847 / LMG 12228 / 1C / PRS 101 / PAO1).